The following is a 129-amino-acid chain: Glycine cleavage system H protein (129 aa).

Residues 24–106 (LFKIGVSEFA…IGDGWLLIIK (83 aa)) form the Lipoyl-binding domain. N6-lipoyllysine is present on lysine 65.

This sequence belongs to the GcvH family. In terms of assembly, the glycine cleavage system is composed of four proteins: P, T, L and H. Requires (R)-lipoate as cofactor.

The glycine cleavage system catalyzes the degradation of glycine. The H protein shuttles the methylamine group of glycine from the P protein to the T protein. The chain is Glycine cleavage system H protein from Prochlorococcus marinus subsp. pastoris (strain CCMP1986 / NIES-2087 / MED4).